Consider the following 394-residue polypeptide: Elongation factor Tu 1 (394 aa).

In terms of domain architecture, tr-type G spans 10 to 204; sequence KPHVNVGTIG…ALDTYIPEPA (195 aa). The interval 19–26 is G1; that stretch reads GHVDHGKT. 19–26 provides a ligand contact to GTP; sequence GHVDHGKT. Thr-26 is a Mg(2+) binding site. Residues 60-64 form a G2 region; that stretch reads GITIN. The tract at residues 81–84 is G3; that stretch reads DCPG. GTP is bound by residues 81–85 and 136–139; these read DCPGH and NKCD. The G4 stretch occupies residues 136 to 139; sequence NKCD. Residues 174-176 form a G5 region; the sequence is SAL.

This sequence belongs to the TRAFAC class translation factor GTPase superfamily. Classic translation factor GTPase family. EF-Tu/EF-1A subfamily. Monomer.

Its subcellular location is the cytoplasm. The enzyme catalyses GTP + H2O = GDP + phosphate + H(+). Its function is as follows. GTP hydrolase that promotes the GTP-dependent binding of aminoacyl-tRNA to the A-site of ribosomes during protein biosynthesis. The protein is Elongation factor Tu 1 of Shewanella frigidimarina (strain NCIMB 400).